The following is a 213-amino-acid chain: High frequency lysogenization protein HflD (213 aa).

Positions 79–126 (QGLNAELTRYTLSLMVLERKLSSAKGALDTLGNRINGLQRQLEHFDLQ) form a coiled coil.

It belongs to the HflD family. As to quaternary structure, interacts with CII protein from phage lambda.

It localises to the cytoplasm. The protein resides in the cell inner membrane. Its function is as follows. Negative regulator of phage lambda lysogenization. Contributes to the degradation of the phage regulatory protein CII. Acts probably by holding CII on the membrane surface, away from the target promoters, but close to the FtsH protease. This Escherichia coli O127:H6 (strain E2348/69 / EPEC) protein is High frequency lysogenization protein HflD.